The following is a 483-amino-acid chain: ATP synthase subunit beta (483 aa).

162–169 (GGAGVGKT) is a binding site for ATP.

This sequence belongs to the ATPase alpha/beta chains family. F-type ATPases have 2 components, CF(1) - the catalytic core - and CF(0) - the membrane proton channel. CF(1) has five subunits: alpha(3), beta(3), gamma(1), delta(1), epsilon(1). CF(0) has four main subunits: a(1), b(1), b'(1) and c(9-12).

It is found in the cellular thylakoid membrane. It carries out the reaction ATP + H2O + 4 H(+)(in) = ADP + phosphate + 5 H(+)(out). Its function is as follows. Produces ATP from ADP in the presence of a proton gradient across the membrane. The catalytic sites are hosted primarily by the beta subunits. This chain is ATP synthase subunit beta, found in Synechocystis sp. (strain ATCC 27184 / PCC 6803 / Kazusa).